We begin with the raw amino-acid sequence, 137 residues long: MEIKCHRVSGGCAEGPALVTRERISFLGNVDPETGVVVDPAHELYGRSIAGVVLIFPGGKGSTVGSYVIYQLRKRGMAPAAMINLKSEPIVAVGAIISDIPLVDRVPEWILDVKDGTRVVVDARREVVVLPDGSVKV.

S62 serves as the catalytic Proton acceptor.

Belongs to the AcnX type II small subunit family. In terms of assembly, heterodimer composed of a large subunit (PMDh-L) and a small subunit (PMDh-S).

It catalyses the reaction (R)-5-phosphomevalonate = (2E)-3-methyl-5-phosphooxypent-2-enoate + H2O. The protein operates within isoprenoid biosynthesis; isopentenyl diphosphate biosynthesis via mevalonate pathway. Its function is as follows. Component of a hydro-lyase that catalyzes the dehydration of mevalonate 5-phosphate (MVA5P) to form trans-anhydromevalonate 5-phosphate (tAHMP). Involved in the archaeal mevalonate (MVA) pathway, which provides fundamental precursors for isoprenoid biosynthesis, such as isopentenyl diphosphate (IPP) and dimethylallyl diphosphate (DMAPP). In Methanothrix thermoacetophila (strain DSM 6194 / JCM 14653 / NBRC 101360 / PT) (Methanosaeta thermophila), this protein is Phosphomevalonate dehydratase small subunit.